The chain runs to 549 residues: Hydroxylamine reductase (549 aa).

The [4Fe-4S] cluster site is built by Cys-3, Cys-6, Cys-15, and Cys-21. The hybrid [4Fe-2O-2S] cluster site is built by His-244, Glu-268, Cys-313, Cys-405, Cys-433, Cys-458, Glu-492, and Lys-494. Cysteine persulfide is present on Cys-405.

This sequence belongs to the HCP family. [4Fe-4S] cluster serves as cofactor. It depends on hybrid [4Fe-2O-2S] cluster as a cofactor.

Its subcellular location is the cytoplasm. The catalysed reaction is A + NH4(+) + H2O = hydroxylamine + AH2 + H(+). Functionally, catalyzes the reduction of hydroxylamine to form NH(3) and H(2)O. The sequence is that of Hydroxylamine reductase from Gloeothece citriformis (strain PCC 7424) (Cyanothece sp. (strain PCC 7424)).